Here is a 273-residue protein sequence, read N- to C-terminus: Protein N-terminal and lysine N-methyltransferase EFM7 (273 aa).

Residues 1–32 form a disordered region; the sequence is MSDIEDLASGGLFDEPKDFYKPEEQPGSDSYA. Residues 14-24 are compositionally biased toward basic and acidic residues; it reads DEPKDFYKPEE. S-adenosyl-L-methionine contacts are provided by residues Trp-65, 92–94, Asp-114, Trp-161, and Ser-183; that span reads GAG.

This sequence belongs to the class I-like SAM-binding methyltransferase superfamily. EFM7 family.

It is found in the cytoplasm. In terms of biological role, S-adenosyl-L-methionine-dependent protein methyltransferase that trimethylates the N-terminal glycine 'Gly-2' of elongation factor 1-alpha, before also catalyzing the mono- and dimethylation of 'Lys-3'. The chain is Protein N-terminal and lysine N-methyltransferase EFM7 from Yarrowia lipolytica (strain CLIB 122 / E 150) (Yeast).